The chain runs to 232 residues: Large ribosomal subunit protein uL1 (232 aa).

It belongs to the universal ribosomal protein uL1 family. Part of the 50S ribosomal subunit.

Its function is as follows. Binds directly to 23S rRNA. The L1 stalk is quite mobile in the ribosome, and is involved in E site tRNA release. Functionally, protein L1 is also a translational repressor protein, it controls the translation of the L11 operon by binding to its mRNA. The polypeptide is Large ribosomal subunit protein uL1 (Xylella fastidiosa (strain M12)).